A 691-amino-acid polypeptide reads, in one-letter code: F-box/LRR-repeat protein 5 (691 aa).

Positions 1-159 are hemerythrin-like; it reads MAPFPEEVDV…IKKKVIAQHC (159 aa). Fe(3+) contacts are provided by His-15, His-57, Glu-58, Glu-61, His-80, His-126, and Glu-130. Residues 202 to 248 enclose the F-box domain; that stretch reads STGITHLPPEVMLSIFSYLNPQELCRCSQVSMKWSQLTKTGSLWKHL. 7 LRR repeats span residues 340 to 364, 365 to 392, 393 to 418, 479 to 508, 576 to 607, 608 to 635, and 636 to 661; these read SSAVSSKMVRQILELCPNLEHLDLT, QTDISDSAFDSWSWLGCCQSLRHLDLSG, CEKITDVALEKISRALGILTSHQSGF, LWMLDAEDLADIEDTVEWRHRNVESLCVVE, TRLPRGKDLIYFGSEKSDQETGRVLLFLSLSG, CYQITDHGLRVLTLGGGLPYLEHLNLSG, and CLTITGAGLQDLVSACPSLNDEYFYY. Positions 662, 676, 686, and 687 each coordinate [2Fe-2S] cluster.

In terms of assembly, part of a SCF (SKP1-cullin-F-box) protein ligase complex. Interacts with ACO1/IRP1, IREB2/IRP2; the interaction depends on the [2Fe-2S] cluster. Interacts with DCTN1/p150-glued. It depends on [2Fe-2S] cluster as a cofactor. Polybiquitinated upon iron and oxygen depletion, leading to its degradation by the proteasome. Ubiquitination is regulated by the hemerythrin-like region that acts as an oxygen and iron sensor. Undergoes constitutive ubiquitin-dependent degradation at the steady state by HERC2.

The protein resides in the cytoplasm. It localises to the perinuclear region. It is found in the nucleus. It functions in the pathway protein modification; protein ubiquitination. An iron-sulfur cluster promotes IRP2 polyubiquitination and degradation in response to both iron and oxygen concentrations. Component of some SCF (SKP1-cullin-F-box) protein ligase complex that plays a central role in iron homeostasis by promoting the ubiquitination and subsequent degradation of IREB2/IRP2. The C-terminal domain of FBXL5 contains a redox-sensitive [2Fe-2S] cluster that, upon oxidation, promotes binding to IRP2 to effect its oxygen-dependent degradation. Under iron deficiency conditions, the N-terminal hemerythrin-like (Hr) region, which contains a diiron metal center, cannot bind iron and undergoes conformational changes that destabilize the FBXL5 protein and cause its ubiquitination and degradation. When intracellular iron levels start rising, the Hr region is stabilized. Additional increases in iron levels facilitate the assembly and incorporation of a redox active [2Fe-2S] cluster in the C-terminal domain. Only when oxygen level is high enough to maintain the cluster in its oxidized state can FBXL5 recruit IRP2 as a substrate for polyubiquination and degradation. Promotes ubiquitination and subsequent degradation of the dynactin complex component DCTN1. Within the nucleus, promotes the ubiquitination of SNAI1; preventing its interaction with DNA and promoting its degradation. Negatively regulates DNA damage response by mediating the ubiquitin-proteasome degradation of the DNA repair protein NABP2. The polypeptide is F-box/LRR-repeat protein 5 (FBXL5) (Pongo abelii (Sumatran orangutan)).